Consider the following 137-residue polypeptide: Phosphatidylinositol N-acetylglucosaminyltransferase subunit P (137 aa).

Transmembrane regions (helical) follow at residues 16–36 and 58–78; these read VYGF…LIWG and MAMP…YIGL.

It belongs to the PIGP family.

The protein resides in the membrane. The enzyme catalyses a 1,2-diacyl-sn-glycero-3-phospho-(1D-myo-inositol) + UDP-N-acetyl-alpha-D-glucosamine = a 6-(N-acetyl-alpha-D-glucosaminyl)-1-(1,2-diacyl-sn-glycero-3-phospho)-1D-myo-inositol + UDP + H(+). It functions in the pathway glycolipid biosynthesis; glycosylphosphatidylinositol-anchor biosynthesis. Its function is as follows. Part of the complex catalyzing the transfer of N-acetylglucosamine from UDP-N-acetylglucosamine to phosphatidylinositol, the first step of GPI biosynthesis. This chain is Phosphatidylinositol N-acetylglucosaminyltransferase subunit P, found in Arabidopsis thaliana (Mouse-ear cress).